We begin with the raw amino-acid sequence, 313 residues long: 4-diphosphocytidyl-2-C-methyl-D-erythritol kinase (313 aa).

Lys-10 is an active-site residue. 95-105 provides a ligand contact to ATP; that stretch reads PVTAGLGGGSS. Asp-136 is a catalytic residue. The disordered stretch occupies residues 289–313; that stretch reads HPRVSPWRSPRSASSPSTRRSSRPT. The span at 292–307 shows a compositional bias: low complexity; it reads VSPWRSPRSASSPSTR.

It belongs to the GHMP kinase family. IspE subfamily.

It carries out the reaction 4-CDP-2-C-methyl-D-erythritol + ATP = 4-CDP-2-C-methyl-D-erythritol 2-phosphate + ADP + H(+). It functions in the pathway isoprenoid biosynthesis; isopentenyl diphosphate biosynthesis via DXP pathway; isopentenyl diphosphate from 1-deoxy-D-xylulose 5-phosphate: step 3/6. In terms of biological role, catalyzes the phosphorylation of the position 2 hydroxy group of 4-diphosphocytidyl-2C-methyl-D-erythritol. The protein is 4-diphosphocytidyl-2-C-methyl-D-erythritol kinase of Anaeromyxobacter dehalogenans (strain 2CP-C).